The following is a 186-amino-acid chain: Elongation factor P (186 aa).

It belongs to the elongation factor P family.

Its subcellular location is the cytoplasm. The protein operates within protein biosynthesis; polypeptide chain elongation. Its function is as follows. Involved in peptide bond synthesis. Stimulates efficient translation and peptide-bond synthesis on native or reconstituted 70S ribosomes in vitro. Probably functions indirectly by altering the affinity of the ribosome for aminoacyl-tRNA, thus increasing their reactivity as acceptors for peptidyl transferase. This is Elongation factor P from Shewanella sp. (strain ANA-3).